We begin with the raw amino-acid sequence, 616 residues long: Dihydroxy-acid dehydratase (616 aa).

Residue Asp81 participates in Mg(2+) binding. Cys122 contacts [2Fe-2S] cluster. Residues Asp123 and Lys124 each coordinate Mg(2+). Lys124 is subject to N6-carboxylysine. Cys195 serves as a coordination point for [2Fe-2S] cluster. Residue Glu491 coordinates Mg(2+). Ser517 serves as the catalytic Proton acceptor.

The protein belongs to the IlvD/Edd family. In terms of assembly, homodimer. [2Fe-2S] cluster serves as cofactor. The cofactor is Mg(2+).

It catalyses the reaction (2R)-2,3-dihydroxy-3-methylbutanoate = 3-methyl-2-oxobutanoate + H2O. The enzyme catalyses (2R,3R)-2,3-dihydroxy-3-methylpentanoate = (S)-3-methyl-2-oxopentanoate + H2O. The protein operates within amino-acid biosynthesis; L-isoleucine biosynthesis; L-isoleucine from 2-oxobutanoate: step 3/4. It functions in the pathway amino-acid biosynthesis; L-valine biosynthesis; L-valine from pyruvate: step 3/4. Functions in the biosynthesis of branched-chain amino acids. Catalyzes the dehydration of (2R,3R)-2,3-dihydroxy-3-methylpentanoate (2,3-dihydroxy-3-methylvalerate) into 2-oxo-3-methylpentanoate (2-oxo-3-methylvalerate) and of (2R)-2,3-dihydroxy-3-methylbutanoate (2,3-dihydroxyisovalerate) into 2-oxo-3-methylbutanoate (2-oxoisovalerate), the penultimate precursor to L-isoleucine and L-valine, respectively. The polypeptide is Dihydroxy-acid dehydratase (Escherichia coli O7:K1 (strain IAI39 / ExPEC)).